The sequence spans 572 residues: Proline--tRNA ligase (572 aa).

This sequence belongs to the class-II aminoacyl-tRNA synthetase family. ProS type 1 subfamily. In terms of assembly, homodimer.

The protein resides in the cytoplasm. It carries out the reaction tRNA(Pro) + L-proline + ATP = L-prolyl-tRNA(Pro) + AMP + diphosphate. Catalyzes the attachment of proline to tRNA(Pro) in a two-step reaction: proline is first activated by ATP to form Pro-AMP and then transferred to the acceptor end of tRNA(Pro). As ProRS can inadvertently accommodate and process non-cognate amino acids such as alanine and cysteine, to avoid such errors it has two additional distinct editing activities against alanine. One activity is designated as 'pretransfer' editing and involves the tRNA(Pro)-independent hydrolysis of activated Ala-AMP. The other activity is designated 'posttransfer' editing and involves deacylation of mischarged Ala-tRNA(Pro). The misacylated Cys-tRNA(Pro) is not edited by ProRS. The polypeptide is Proline--tRNA ligase (Caldicellulosiruptor saccharolyticus (strain ATCC 43494 / DSM 8903 / Tp8T 6331)).